We begin with the raw amino-acid sequence, 1207 residues long: MKSLAGHVVKYGKHRERRSFARISEVLELPNLIEIQTDSYQWFLDEGLREMFEDILPIDDFQGNLSLEFVDYELKEPKYTVEEARAHDANYSAPLHVTLRLTNRETGEIKSQEVFFGDFPLMTEMGTFIINGAERVIVSQLVRSPGVYFHGKVDKNGKEGFGSTVIPNRGAWLEMETDAKDISYVRIDRTRKIPLTVLVRALGFGSDDTIFEIFGDSESLRNTIEKDLHKNASDSRTEEGLKDIYERLRPGEPKTADSSRSLLTARFFDPKRYDLANVGRYKVNKKLDLKTRLLNLTLAETLVDPETGEIIVEKGTVLTHQIMETLGEYIDNGLNSVTYYPSEDAVVTEPMTIQVIQVLSPKDPERIVNVIGNGYPDDSVKTVRPADIVASMSYFFNLMEDIGNVDDIDHLGNRRIRSVGELLQNQFRIGLARMERVVRERMSIQDTETLTPQQLINIRPVVASIKEFFGSSQLSQFMDQTNPLGELTHKRRLSALGPGGLTRDRAGYEVRDVHYSHYGRMCPIETPEGPNIGLINSLSSYAKVNKFGFIETPYRRVDRATGRVTDQVDYLTADIEDHYIVAQANSLLNEDGTFANDVVMARLQSENLEVAVDKVDYMDVSPKQVVAVATACIPFLENDDSNRALMGANMQRQAVPLIQPRSPWVGTGMEYKSAHDSGAALLCKHDGVVEFVDAKEIRVRRDNGALDKYMVTKFRRSNSGTSYNQRPIVHLGEKVEKGDTLADGPSMEEGEMALGQNVLVAFMTWEGYNYEDAIIMSRRLVKDDVYTSVHIEEYESEARDTKLGPEEITREIPNVGEDALKDLDEMGIIRIGAEVQDGDLLVGKVTPKGVTELSAEERLLHAIFGEKAREVRDTSLRVPHGGGGIVHDVKIFTREAGDELSPGVNMLVRVYIVQKRKIHEGDKMAGRHGNKGVVSRIMPEEDMPFLPDGTPVDIMLNPLGVPSRMNIGQVLELHLGMAARQLGIHVATPVFDGATDEDVWETVREAGMASDAKTVLYDGRTGEPFDNRISVGVMYMIKLAHMVDDKLHARSIGPYSLVTQQPLGGKAQFGGQRFGEMEVWALEAYGAAYTLQEILTYKSDDVVGRVKTYEAIVKGEPIPKPGVPESFRVLVKELQSLGLDMRVLDIEEAEIELRDMDDDDDDLITVDALTKFAEQQSAKQLEKEAESVVKEEAQDVVQEIETAEDRD.

The protein belongs to the RNA polymerase beta chain family. In terms of assembly, the RNAP catalytic core consists of 2 alpha, 1 beta, 1 beta' and 1 omega subunit. When a sigma factor is associated with the core the holoenzyme is formed, which can initiate transcription.

The enzyme catalyses RNA(n) + a ribonucleoside 5'-triphosphate = RNA(n+1) + diphosphate. DNA-dependent RNA polymerase catalyzes the transcription of DNA into RNA using the four ribonucleoside triphosphates as substrates. The sequence is that of DNA-directed RNA polymerase subunit beta from Enterococcus faecalis (strain ATCC 700802 / V583).